The primary structure comprises 177 residues: MKALLLTFSLSLLAALQAQAFPTTEENQDVSGTWYLKAAAWDKEIPDKKFGSVSVTPMKIKTLEGGNLQVKFTVLISGRCQEMSTVLEKTDEPGKYTAYSGKQVVYSIPSAVEDHYIFYYEGKIHRHHFQIAKLVGRNPEINQEALEDFQNAVRAGGLNPDNIFIPKQSETCPLGSN.

A signal peptide spans 1-18 (MKALLLTFSLSLLAALQA). Cys-80 and Cys-172 are oxidised to a cystine.

The protein belongs to the calycin superfamily. Lipocalin family. In terms of assembly, homodimer.

Its subcellular location is the secreted. Functionally, could play a role in taste reception. Could be necessary for the concentration and delivery of sapid molecules in the gustatory system. The polypeptide is von Ebner gland protein 2 (Vegp2) (Rattus norvegicus (Rat)).